Reading from the N-terminus, the 367-residue chain is Alanine racemase (367 aa).

Residue Lys-40 is the Proton acceptor; specific for D-alanine of the active site. The residue at position 40 (Lys-40) is an N6-(pyridoxal phosphate)lysine. Arg-136 contributes to the substrate binding site. The Proton acceptor; specific for L-alanine role is filled by Tyr-263. Met-310 serves as a coordination point for substrate.

The protein belongs to the alanine racemase family. Pyridoxal 5'-phosphate serves as cofactor.

The catalysed reaction is L-alanine = D-alanine. It participates in amino-acid biosynthesis; D-alanine biosynthesis; D-alanine from L-alanine: step 1/1. In terms of biological role, catalyzes the interconversion of L-alanine and D-alanine. May also act on other amino acids. This chain is Alanine racemase (alr), found in Lactococcus lactis subsp. cremoris (strain MG1363).